The following is a 128-amino-acid chain: MLMLLCIIATVIPFSLVEGRKGCWADPTPPGKECLYGKEIHGGRNLGIHYIFTSKFTRICCQALECQYWGLCRFKDVWCGQSVSGVPIKANALLWGQRDVEPIMRCYDSRGAGAYYSFTVQVVPIEDR.

The N-terminal stretch at 1–19 (MLMLLCIIATVIPFSLVEG) is a signal peptide.

Component of the acid-insoluble organic matrix of the calcified shell.

The protein localises to the secreted. The protein is Insoluble matrix shell protein 3 of Ruditapes philippinarum (Japanese carpet shell).